The sequence spans 301 residues: Large ribosomal subunit protein uL18z (301 aa).

It belongs to the universal ribosomal protein uL18 family. As to quaternary structure, component of the large ribosomal subunit (LSU). Expressed in seedlings, roots, stems, leaves, inflorescences and siliques.

The protein localises to the cytoplasm. Its subcellular location is the nucleus. It localises to the nucleolus. The protein resides in the nucleoplasm. Component of the ribosome, a large ribonucleoprotein complex responsible for the synthesis of proteins in the cell. The small ribosomal subunit (SSU) binds messenger RNAs (mRNAs) and translates the encoded message by selecting cognate aminoacyl-transfer RNA (tRNA) molecules. The large subunit (LSU) contains the ribosomal catalytic site termed the peptidyl transferase center (PTC), which catalyzes the formation of peptide bonds, thereby polymerizing the amino acids delivered by tRNAs into a polypeptide chain. The nascent polypeptides leave the ribosome through a tunnel in the LSU and interact with protein factors that function in enzymatic processing, targeting, and the membrane insertion of nascent chains at the exit of the ribosomal tunnel. Seems involved in the regulation of cell proliferation. Essential in leaf polarity establishment, probably having a role for translation in leaf dorsoventral patterning to specify leaf adaxial identity. The protein is Large ribosomal subunit protein uL18z of Arabidopsis thaliana (Mouse-ear cress).